The primary structure comprises 185 residues: Pyruvate/ketoisovalerate oxidoreductases common subunit gamma (185 aa).

In terms of assembly, heterotetramer of one alpha, one beta, one delta and one gamma chain.

It carries out the reaction 2 oxidized [2Fe-2S]-[ferredoxin] + pyruvate + CoA = 2 reduced [2Fe-2S]-[ferredoxin] + acetyl-CoA + CO2 + H(+). It catalyses the reaction 3-methyl-2-oxobutanoate + 2 oxidized [2Fe-2S]-[ferredoxin] + CoA = 2-methylpropanoyl-CoA + 2 reduced [2Fe-2S]-[ferredoxin] + CO2 + H(+). This chain is Pyruvate/ketoisovalerate oxidoreductases common subunit gamma (porG), found in Thermococcus kodakarensis (strain ATCC BAA-918 / JCM 12380 / KOD1) (Pyrococcus kodakaraensis (strain KOD1)).